Here is a 405-residue protein sequence, read N- to C-terminus: L-rhamnonate dehydratase (405 aa).

2 residues coordinate substrate: His-33 and Arg-59. Positions 226, 252, and 280 each coordinate Mg(2+). His-329 acts as the Proton acceptor in catalysis. Glu-349 serves as a coordination point for substrate.

It belongs to the mandelate racemase/muconate lactonizing enzyme family. RhamD subfamily. As to quaternary structure, homooctamer; tetramer of dimers. It depends on Mg(2+) as a cofactor.

It catalyses the reaction L-rhamnonate = 2-dehydro-3-deoxy-L-rhamnonate + H2O. Its function is as follows. Catalyzes the dehydration of L-rhamnonate to 2-keto-3-deoxy-L-rhamnonate (KDR). The sequence is that of L-rhamnonate dehydratase from Escherichia coli O6:K15:H31 (strain 536 / UPEC).